Reading from the N-terminus, the 361-residue chain is MTSRTKKLKMDEEEILKKEDGSETTSEEEKEEVEEEEEEDKKRKLVKKTPAKKAPAKKAAAKKKSKDEDEDEEEKEEEEETNKTTASVSIAIDNLDEPKVEENQMKIISWNVAGFKSVLSKGFTEYVEKENPDVLCLQETKINPSNIKKDQMPKGYEYHFIEADQKGHHGTGVLTKKKPNAITFGIGIAKHDNEGRVITLEYDQFYIVNTYIPNAGTRGLQRLDYRIKEWDVDFQAYLEKLNATKPIIWCGDLNVAHTEIDLKNPKTNKKSAGFTIEERTSFSNFLEKGYVDSYRHFNPGKEGSYTFWSYLGGGRSKNVGWRLDYFVVSKRLMDSIKISPFHRTSVMGSDHCPIGVVVDLN.

The segment at 1-90 (MTSRTKKLKM…TNKTTASVSI (90 aa)) is disordered. Positions 25–39 (TSEEEKEEVEEEEEE) are enriched in acidic residues. The short motif at 41–44 (KKRK) is the Nuclear localization signal element. Over residues 43-64 (RKLVKKTPAKKAPAKKAAAKKK) the composition is skewed to basic residues. Over residues 68–80 (EDEDEEEKEEEEE) the composition is skewed to acidic residues. E139 lines the Mg(2+) pocket. The active site involves Y211. 3 residues coordinate Mg(2+): D252, N254, and D350. D252 serves as the catalytic Proton donor/acceptor.

This sequence belongs to the DNA repair enzymes AP/ExoA family. It depends on Mg(2+) as a cofactor. The cofactor is Mn(2+).

It localises to the nucleus. The sequence is that of DNA-(apurinic or apyrimidinic site) endonuclease (apeA) from Dictyostelium discoideum (Social amoeba).